Reading from the N-terminus, the 338-residue chain is Fructose-1,6-bisphosphatase class 1 (338 aa).

Residues E92, D114, L116, and D117 each contribute to the Mg(2+) site. Residues 117-120 (DGSS), N210, Y243, and K276 contribute to the substrate site. A Mg(2+)-binding site is contributed by E282.

It belongs to the FBPase class 1 family. As to quaternary structure, homotetramer. Mg(2+) serves as cofactor.

It is found in the cytoplasm. The enzyme catalyses beta-D-fructose 1,6-bisphosphate + H2O = beta-D-fructose 6-phosphate + phosphate. It participates in carbohydrate biosynthesis; gluconeogenesis. This is Fructose-1,6-bisphosphatase class 1 from Maridesulfovibrio salexigens (strain ATCC 14822 / DSM 2638 / NCIMB 8403 / VKM B-1763) (Desulfovibrio salexigens).